Here is a 544-residue protein sequence, read N- to C-terminus: Phosphoacetylglucosamine mutase (544 aa).

Serine 66 functions as the Phosphoserine intermediate in the catalytic mechanism. Positions 66, 290, 292, and 294 each coordinate Mg(2+). Substrate contacts are provided by residues 387-389 (EAN), 512-516 (RASGT), and arginine 521.

The protein belongs to the phosphohexose mutase family. The cofactor is Mg(2+).

The enzyme catalyses N-acetyl-alpha-D-glucosamine 1-phosphate = N-acetyl-D-glucosamine 6-phosphate. Its pathway is nucleotide-sugar biosynthesis; UDP-N-acetyl-alpha-D-glucosamine biosynthesis; N-acetyl-alpha-D-glucosamine 1-phosphate from alpha-D-glucosamine 6-phosphate (route I): step 2/2. Its function is as follows. Catalyzes the conversion of GlcNAc-6-P into GlcNAc-1-P during the synthesis of uridine diphosphate/UDP-GlcNAc, which is a biosynthetic precursor of chitin and also supplies the amino sugars for N-linked oligosaccharides of glycoproteins. The chain is Phosphoacetylglucosamine mutase from Candida albicans (Yeast).